The chain runs to 249 residues: MKFSSGKSIIFATIASLALSAPVTYDTNSTAELQSPSSQEILGWSHATFPTIYQTCNETNARMLNAAFKDTAEITAYGKDRLLNYGVDDVYYKRWFGNGSIFTVMGVFEQLMEASKGAMLMRCDDIDGLCAANPNYYAGHHRQSAPAETVICDYFYTSKKPLSTICFEGTIVDVGPKHYAGIDMLHRYLHVPTMSMDGYVGEYAETLEEVVDYTQNNATYAVRNTDNYLYYLADVYSASVIPGGCLGNL.

The signal sequence occupies residues 1–20 (MKFSSGKSIIFATIASLALS). N28, N57, N98, and N217 each carry an N-linked (GlcNAc...) asparagine glycan.

The protein belongs to the ZPS1 family.

The sequence is that of Protein ZPS1 (ZPS1) from Saccharomyces cerevisiae (strain ATCC 204508 / S288c) (Baker's yeast).